A 120-amino-acid chain; its full sequence is cAMP-responsive element-binding protein-like 2 (120 aa).

A disordered region spans residues 1–24 (MDDSKVVGGKVKKPGKRGRKPAKI). Positions 10–21 (KVKKPGKRGRKP) are enriched in basic residues. In terms of domain architecture, bZIP spans 23 to 86 (KIDLKAKLER…MAMDQGKIPS (64 aa)). Residues 29 to 60 (KLERSRQSARECRARKKLRYQYLEELVSSRER) are basic motif. The segment at 62–69 (ICALREEL) is leucine-zipper. A disordered region spans residues 93–120 (TGEEQSKSQQNSSRHMKAGKTDANSNSW).

Belongs to the bZIP family. ATF subfamily. As to quaternary structure, interacts with CREB1; regulates CREB1 phosphorylation, stability and transcriptional activity. Interacts with immediate-early (IE) protein BICP22 of bovine herpesvirus-1 (BHV-1). Post-translationally, phosphorylated by AMPK.

The protein resides in the nucleus. Probable regulator of CREB1 transcriptional activity which is involved in adipose cells differentiation. May also play a regulatory role in the cell cycle. The protein is cAMP-responsive element-binding protein-like 2 (CREBL2) of Bos taurus (Bovine).